A 578-amino-acid chain; its full sequence is L-ascorbate oxidase (578 aa).

The signal sequence occupies residues 1–28 (MASLGFLFFFLLPLILLELSSSRSVMAA). Plastocyanin-like domains follow at residues 30-149 (TRHF…LIVE) and 161-328 (DGEF…NYLP). Cu cation-binding residues include His-87, His-89, His-131, and His-133. Intrachain disulfides connect Cys-108-Cys-565 and Cys-207-Cys-221. N-linked (GlcNAc...) asparagine glycosylation is present at Asn-206. N-linked (GlcNAc...) asparagine glycans are attached at residues Asn-349, Asn-394, Asn-438, and Asn-451. In terms of domain architecture, Plastocyanin-like 3 spans 372 to 550 (HRRIILLNTQ…HMGMGVIFAE (179 aa)). His-472, His-475, His-477, His-533, Cys-534, His-535, His-539, and Met-544 together coordinate Cu cation.

It belongs to the multicopper oxidase family. In terms of assembly, dimer. Cu cation is required as a cofactor. Highly expressed in young and growing tissues.

It is found in the secreted. The catalysed reaction is 4 L-ascorbate + O2 = 4 monodehydro-L-ascorbate radical + 2 H2O. Functionally, may be involved in a redox system involving ascorbic acid. The chain is L-ascorbate oxidase (AAO) from Nicotiana tabacum (Common tobacco).